A 355-amino-acid polypeptide reads, in one-letter code: Polyferredoxin protein FwdF (355 aa).

4Fe-4S ferredoxin-type domains are found at residues 24 to 53 (RELC…MGPL), 64 to 93 (PKLD…LKIN), 108 to 137 (RDIK…VERE), 147 to 176 (GEIN…LKYN), 187 to 216 (TDIE…VICY), 235 to 264 (GKTV…VEKP), 267 to 296 (GELI…FPKP), and 304 to 333 (PRII…VKRT). [4Fe-4S] cluster is bound by residues Cys33, Cys36, Cys39, Cys43, Cys73, Cys76, Cys79, Cys83, Cys117, Cys120, Cys123, Cys127, Cys156, Cys159, Cys162, Cys166, Cys196, Cys199, Cys202, Cys206, Cys244, Cys247, Cys250, Cys254, Cys276, Cys279, Cys282, Cys286, Cys313, Cys316, Cys319, and Cys323.

Requires [4Fe-4S] cluster as cofactor.

The protein is Polyferredoxin protein FwdF (fwdF) of Methanocaldococcus jannaschii (strain ATCC 43067 / DSM 2661 / JAL-1 / JCM 10045 / NBRC 100440) (Methanococcus jannaschii).